A 122-amino-acid chain; its full sequence is Large ribosomal subunit protein uL14 (122 aa).

It belongs to the universal ribosomal protein uL14 family. Part of the 50S ribosomal subunit. Forms a cluster with proteins L3 and L19. In the 70S ribosome, L14 and L19 interact and together make contacts with the 16S rRNA in bridges B5 and B8.

Binds to 23S rRNA. Forms part of two intersubunit bridges in the 70S ribosome. In Agrobacterium fabrum (strain C58 / ATCC 33970) (Agrobacterium tumefaciens (strain C58)), this protein is Large ribosomal subunit protein uL14.